Reading from the N-terminus, the 314-residue chain is tRNA pseudouridine synthase B (314 aa).

The active-site Nucleophile is Asp-41.

The protein belongs to the pseudouridine synthase TruB family. Type 1 subfamily.

The catalysed reaction is uridine(55) in tRNA = pseudouridine(55) in tRNA. Functionally, responsible for synthesis of pseudouridine from uracil-55 in the psi GC loop of transfer RNAs. The protein is tRNA pseudouridine synthase B of Prochlorococcus marinus (strain NATL1A).